The chain runs to 609 residues: UvrABC system protein C (609 aa).

The GIY-YIG domain maps to 16-94 (SSPGVYRMYD…IKQYMPKYNV (79 aa)). Positions 203 to 238 (QQVTKALVAKMEQAAVELNYEQAARYRDQITALRRV) constitute a UVR domain.

It belongs to the UvrC family. In terms of assembly, interacts with UvrB in an incision complex.

The protein localises to the cytoplasm. Functionally, the UvrABC repair system catalyzes the recognition and processing of DNA lesions. UvrC both incises the 5' and 3' sides of the lesion. The N-terminal half is responsible for the 3' incision and the C-terminal half is responsible for the 5' incision. The protein is UvrABC system protein C of Shewanella piezotolerans (strain WP3 / JCM 13877).